We begin with the raw amino-acid sequence, 45 residues long: uncharacterized protein (45 aa).

An N-terminal signal peptide occupies residues M1 to A19.

This is an uncharacterized protein from Saccharomyces cerevisiae (strain ATCC 204508 / S288c) (Baker's yeast).